The primary structure comprises 118 residues: Cycloviolacin-O8 (118 aa).

Residues 1–22 (MEMKNMVVGLFLIAAFALPALA) form the signal peptide. A propeptide spanning residues 23–84 (TNFEKDFITH…THSNSINALG (62 aa)) is cleaved from the precursor. The cyclopeptide (Gly-Asn) cross-link spans 85–115 (GTLPCGESCVWIPCISSVVGCSCKSKVCYKN). Disulfide bonds link Cys-89/Cys-105, Cys-93/Cys-107, and Cys-98/Cys-112. Residues 116–118 (SLA) constitute a propeptide that is removed on maturation.

In terms of processing, cycloviolacin-O8 is a cyclic peptide. Expressed in leaves, petals, petioles and roots but not in runners (at protein level).

In terms of biological role, probably participates in a plant defense mechanism. This chain is Cycloviolacin-O8 (Voc1), found in Viola odorata (Sweet violet).